The primary structure comprises 624 residues: MPKLRSATSTEGRNMAGARALWRATGVKDNDFGKPIIAIANSFTQFVPGHVHLKDMGSLVASAIEEAGGIAKEFNTIAVDDGIAMGHGGMLYSLPSRELIADSVEYMVNAHCADALVCISNCDKITPGMLMAALRLNIPVVFVSGGPMEAGKTKLSDKLIKLDLVDAMVAGADSNVSDEDSAKIERSACPTCGSCSGMFTANSMNCLTEALGLSLPGNGSMLATHADRRELFLEAGRRVMALAKRYYHQDDESALPRNIANFKAFENAMTLDIAMGGSSNTVLHLLAAAQEADVDFTMADIDRMSRLVPHLCKVAPSTPKYHMEDVHRAGGVMGILGELDRAGLLHTDVFHVAADNDGTPGSGTLKSVLAQYDVMQTQDEKVKHFFMAGPAGIPTTKAFSQDCRWPSLDNDRQEGCIRSREFAFSQEGGLAVLSGNVAENGCIVKTAGVDESNLTFIGSARVYESQDDAVAGILGGEVVAGDVVVIRYEGPKGGPGMQEMLYPTSYLKSRGLGKACALITDGRFSGGTSGLSIGHVSPEAAAGGTIALIENGDRIEIDIPKRSIKLAVSDVELNARREKMHSLGPMAWKPIGRQRYVSLALKAYAMLATSADKGAVRDRSKLED.

Asp81 contributes to the Mg(2+) binding site. Residue Cys122 coordinates [2Fe-2S] cluster. Mg(2+) contacts are provided by Asp123 and Lys124. Lys124 is modified (N6-carboxylysine). Residue Cys195 coordinates [2Fe-2S] cluster. Glu499 is a Mg(2+) binding site. The Proton acceptor role is filled by Ser525.

It belongs to the IlvD/Edd family. In terms of assembly, homodimer. It depends on [2Fe-2S] cluster as a cofactor. Requires Mg(2+) as cofactor.

The enzyme catalyses (2R)-2,3-dihydroxy-3-methylbutanoate = 3-methyl-2-oxobutanoate + H2O. The catalysed reaction is (2R,3R)-2,3-dihydroxy-3-methylpentanoate = (S)-3-methyl-2-oxopentanoate + H2O. The protein operates within amino-acid biosynthesis; L-isoleucine biosynthesis; L-isoleucine from 2-oxobutanoate: step 3/4. It participates in amino-acid biosynthesis; L-valine biosynthesis; L-valine from pyruvate: step 3/4. In terms of biological role, functions in the biosynthesis of branched-chain amino acids. Catalyzes the dehydration of (2R,3R)-2,3-dihydroxy-3-methylpentanoate (2,3-dihydroxy-3-methylvalerate) into 2-oxo-3-methylpentanoate (2-oxo-3-methylvalerate) and of (2R)-2,3-dihydroxy-3-methylbutanoate (2,3-dihydroxyisovalerate) into 2-oxo-3-methylbutanoate (2-oxoisovalerate), the penultimate precursor to L-isoleucine and L-valine, respectively. The chain is Dihydroxy-acid dehydratase from Shewanella baltica (strain OS185).